A 399-amino-acid polypeptide reads, in one-letter code: Rho GTPase-activating protein gacC (399 aa).

Residues 1–13 are compositionally biased toward basic and acidic residues; that stretch reads MESKDQNVYRKGS. The segment at 1–80 is disordered; the sequence is MESKDQNVYR…SSSTSTTPVK (80 aa). Residues 14–31 show a composition bias toward polar residues; the sequence is DNFSKGSNTFFGNLKSIS. Residues 61 to 79 show a composition bias toward low complexity; that stretch reads SVDSSSSNPSSSSTSTTPV. Positions 186–375 constitute a Rho-GAP domain; sequence VELEESFKTA…NLISFFQQIF (190 aa).

It localises to the cytoplasm. Rho GTPase-activating protein involved in the signal transduction pathway. The chain is Rho GTPase-activating protein gacC (gacC) from Dictyostelium discoideum (Social amoeba).